The following is a 178-amino-acid chain: Large ribosomal subunit protein uL10 (178 aa).

The protein belongs to the universal ribosomal protein uL10 family. As to quaternary structure, part of the ribosomal stalk of the 50S ribosomal subunit. The N-terminus interacts with L11 and the large rRNA to form the base of the stalk. The C-terminus forms an elongated spine to which L12 dimers bind in a sequential fashion forming a multimeric L10(L12)X complex.

In terms of biological role, forms part of the ribosomal stalk, playing a central role in the interaction of the ribosome with GTP-bound translation factors. This is Large ribosomal subunit protein uL10 from Albidiferax ferrireducens (strain ATCC BAA-621 / DSM 15236 / T118) (Rhodoferax ferrireducens).